The sequence spans 335 residues: Acetyl-coenzyme A carboxylase carboxyl transferase subunit alpha (335 aa).

Positions T38–N292 constitute a CoA carboxyltransferase C-terminal domain.

Belongs to the AccA family. As to quaternary structure, acetyl-CoA carboxylase is a heterohexamer composed of biotin carboxyl carrier protein (AccB), biotin carboxylase (AccC) and two subunits each of ACCase subunit alpha (AccA) and ACCase subunit beta (AccD).

The protein resides in the cytoplasm. It carries out the reaction N(6)-carboxybiotinyl-L-lysyl-[protein] + acetyl-CoA = N(6)-biotinyl-L-lysyl-[protein] + malonyl-CoA. It participates in lipid metabolism; malonyl-CoA biosynthesis; malonyl-CoA from acetyl-CoA: step 1/1. In terms of biological role, component of the acetyl coenzyme A carboxylase (ACC) complex. First, biotin carboxylase catalyzes the carboxylation of biotin on its carrier protein (BCCP) and then the CO(2) group is transferred by the carboxyltransferase to acetyl-CoA to form malonyl-CoA. The sequence is that of Acetyl-coenzyme A carboxylase carboxyl transferase subunit alpha from Heliobacterium modesticaldum (strain ATCC 51547 / Ice1).